A 916-amino-acid chain; its full sequence is DNA topoisomerase 1 alpha (916 aa).

Residues 1 to 369 form a disordered region; it reads MGTETVSKPV…SSPSSGDGQK (369 aa). Low complexity predominate over residues 34-47; that stretch reads SNSNQSKSNSQRSK. Residues 60 to 76 show a composition bias toward polar residues; that stretch reads PVTSPNGTTPSNKTSIV. Residues 77–93 show a composition bias toward low complexity; the sequence is KSSMPSSSSKASPAKSP. Over residues 102–119 the composition is skewed to basic and acidic residues; the sequence is VKDRSQLQKDQSECKIEH. A compositionally biased stretch (polar residues) spans 130–148; sequence SILSGNKGPTSSRQVSSPQ. The span at 149–168 shows a compositional bias: basic and acidic residues; the sequence is PEKKNNGDRPLDRASRIIKD. Ser170 carries the phosphoserine modification. Over residues 230–239 the composition is skewed to polar residues; sequence KNSSADQSSL. The segment covering 253–267 has biased composition (basic and acidic residues); it reads MKQDSVKKEIDDKGR. A compositionally biased stretch (acidic residues) spans 285-294; the sequence is GTDDDDDDDV. Thr286 carries the post-translational modification Phosphothreonine. The span at 354 to 366 shows a compositional bias: low complexity; it reads YSTSSKSSPSSGD. 3 interaction with DNA regions span residues 577–578, 640–645, and 731–733; these read KY, RAGNEK, and TAK. A Topo IB-type catalytic domain is found at 584–914; that stretch reads GSSLKGLSDK…MDVEPEYRFS (331 aa). Residues 778 to 860 adopt a coiled-coil conformation; that stretch reads QRTVSKTHGA…ERDMHTKEDL (83 aa). The active-site O-(3'-phospho-DNA)-tyrosine intermediate is the Tyr872.

The protein belongs to the type IB topoisomerase family. As to quaternary structure, interacts with DEK3. As to expression, expressed in inflorescence meristems. Expressed in primordia of sepals, petals, stamens, carpels and ovules. Expressed in midstage embryos.

It localises to the nucleus. The enzyme catalyses ATP-independent breakage of single-stranded DNA, followed by passage and rejoining.. In terms of biological role, releases the supercoiling and torsional tension of DNA introduced during the DNA replication and transcription by transiently cleaving and rejoining one strand of the DNA duplex. Introduces a single-strand break via transesterification at a target site in duplex DNA. The scissile phosphodiester is attacked by the catalytic tyrosine of the enzyme, resulting in the formation of a DNA-(3'-phosphotyrosyl)-enzyme intermediate and the expulsion of a 5'-OH DNA strand. The free DNA strand then rotates around the intact phosphodiester bond on the opposing strand, thus removing DNA supercoils. Finally, in the religation step, the DNA 5'-OH attacks the covalent intermediate to expel the active-site tyrosine and restore the DNA phosphodiester backbone. Can complement a TOP1-deficient yeast mutant. Plays a critical role in the maintenance of a regular pattern of organ initiation. Topoisomerases I enzymes (TOP1A and TOP1B) are essential for plant survival. Functions together with the stem cell maintenance gene WUSCHEL (WUS) in stem cell regulation. Required to maintain developmentally regulated gene repression. Functions synergistically with chromatin remodeling factors. Is required for the repression of WUS expression in flower development. Plays a role in polycomb group (PcG) protein-mediated histone H3 trimethylation on 'Lys-27' (H3K27me3) at the WUS gene locus. H3K27me3 induces transcriptional repression of WUS. May assist AGAMOUS (AG) in recruiting PcG proteins to WUS locus. Reduces nucleosome density, especially at genes that are targets of PcG proteins. Plays a role in epigenetic silencing. Involved in RNA-directed DNA methylation (RdDM) by promoting Pol V transcription to generate long non-coding RNA transcripts. Is dispensable for Pol IV-mediated small interfering RNA (siRNA) biogenesis. Promotes transposable element (TE) silencing at endogenous RdDM target loci through histone H3 dimethylation of 'Lys-9' (H3K9me2). Promotes the production of Pol V-dependent long non-coding transcripts that facilitate the recruitment of siRNA-AGO4 and AGO4 occupancy at TEs. The protein is DNA topoisomerase 1 alpha of Arabidopsis thaliana (Mouse-ear cress).